We begin with the raw amino-acid sequence, 517 residues long: Intermediate filament family orphan 2 (517 aa).

Residues 53 to 484 (NIHLLKGLNV…RLIKGSADRN (432 aa)) enclose the IF rod domain. 3 disordered regions span residues 104-129 (EQAV…SSGA), 330-349 (KVAS…RFSD), and 478-517 (KGSA…PMVS). Low complexity predominate over residues 485–497 (SPSPSSVASSDSG). The span at 501–517 (EIQDEFEREADVEPMVS) shows a compositional bias: acidic residues.

It belongs to the intermediate filament family.

The chain is Intermediate filament family orphan 2 (IFFO2) from Homo sapiens (Human).